A 696-amino-acid polypeptide reads, in one-letter code: Gametogenetin-binding protein 2 (696 aa).

Phosphoserine is present on Ser360.

Interacts with GGN.

The protein localises to the cytoplasmic vesicle. Its function is as follows. May be involved in spermatogenesis. This is Gametogenetin-binding protein 2 (Ggnbp2) from Rattus norvegicus (Rat).